The chain runs to 334 residues: O-methyltransferase SfmM3 (334 aa).

Residues Asp-190 and 216–218 (GDF) contribute to the S-adenosyl-L-methionine site. The active-site Proton acceptor is the His-236.

Belongs to the class I-like SAM-binding methyltransferase superfamily. Cation-independent O-methyltransferase family. COMT subfamily.

The enzyme catalyses 5-hydroxy-3-methyl-L-tyrosine + S-adenosyl-L-methionine = 5-hydroxy-3-methyl-O-methyl-L-tyrosine + S-adenosyl-L-homocysteine + H(+). Its pathway is antibiotic biosynthesis. Its function is as follows. O-methyltransferase that mediates the methylation of 3-hydroxy-5-methyl-L-tyrosine (3-OH-5-Me-Tyr) into 3-hydroxy-5-methyl-O-methyltyrosine (3-OH-5-Me-OMe-Tyr), a core structure of saframycin A, a potent antitumor antibiotic that belongs to the tetrahydroisoquinoline family. In Streptomyces lavendulae, this protein is O-methyltransferase SfmM3.